The following is a 376-amino-acid chain: Response regulator aspartate phosphatase H (376 aa).

TPR repeat units lie at residues 99–132 (YYSLFFRGMYEFDQKEYVEAIGYYREAEKELPFV), 139–172 (AEFHFKVAEAYYHMKQTHVSMYHILQALDIYQNH), 180–213 (IQSLFVIAGNYDDFKHYDKALPHLEAALELAMDI), 220–253 (AISLLNIANSYDRSGDDQMAVEHFQKAAKVSREK), 259–292 (PKVLFGLSWTLCKAGQTQKAFQFIEEGLDHITAR), and 334–367 (EACARSAAAVFESSCHFEQAAAFYRKVLKAQEDI).

This sequence belongs to the Rap family. In terms of assembly, homodimer. Interacts with phosphorylated Spo0F. Each RapH protomer is bound to a monomer of Spo0F, forming a heterotetrameric complex. May also interact with non-phosphorylated Spo0F to inhibit the sporulation phosphorelay. Interacts with the C-terminal DNA-binding region of ComA. Does not interact with DegU.

It localises to the cytoplasm. Both activities are inhibited by RapH. Dual specificity regulatory protein that can control both sporulation and competence by acting on two distinct response regulators: Spo0F and ComA, respectively. Is involved in the temporal separation of competence and sporulation. Acts as a phosphatase that specifically dephosphorylates the sporulation initiation phosphotransferase Spo0F and inhibits its activity. RapH can also antagonize sporulation by sterically blocking phosphoryl transfer to and from Spo0F. In addition, inhibits the activity of ComA, a transcriptional factor that regulates the development of genetic competence. Acts by binding to ComA, leading to the inhibition of its DNA-binding activity. This Bacillus subtilis (strain 168) protein is Response regulator aspartate phosphatase H (rapH).